Consider the following 130-residue polypeptide: Protein ApaG (130 aa).

Residues 3–127 (KAETRGISVT…FSLDVPHVRR (125 aa)) form the ApaG domain.

This Methylobacterium sp. (strain 4-46) protein is Protein ApaG.